A 670-amino-acid chain; its full sequence is Outer dynein arm-docking complex subunit 1 (670 aa).

3 coiled-coil regions span residues 9-155 (SKEV…RYLN), 183-224 (AVRE…EQLH), and 302-381 (NFIN…IQLL). The segment at 454–473 (KMAPLQPPDTLEDPPGFEAS) is disordered. Residue serine 517 is modified to Phosphoserine. Disordered stretches follow at residues 526–596 (AGSS…ASSG) and 616–670 (VGSS…DSRG). The span at 584 to 596 (GHVTFGSTSASSG) shows a compositional bias: polar residues. The segment covering 650-670 (SSTGPASSTGPGSSTSKDSRG) has biased composition (low complexity).

Belongs to the ODA1/DCC2 family. In terms of assembly, component of the outer dynein arm-docking complex along with ODAD2, ODAD3, ODAD4 and CLXN. Interacts with ODAD3. Interacts with ODAD4; this interaction may facilitate the recruitment and/or attachment of outer dynein arm docking complex proteins, including ODAD1, ODAD3, and ODAD4 to ciliary axonemes. Interacts with DNAH9. Interacts with MNS1. Interacts with PIERCE1 and PIERCE2; the interactions link the outer dynein arms docking complex (ODA-DC) to the internal microtubule inner proteins (MIP) in cilium axoneme. As to expression, expressed in nasal epithelial cells. Highly expressed in testis and also detected in lung, brain and kidney.

It is found in the cytoplasm. The protein localises to the cytoskeleton. Its subcellular location is the cilium axoneme. Its function is as follows. Component of the outer dynein arm-docking complex (ODA-DC) that mediates outer dynein arms (ODA) binding onto the doublet microtubule. Involved in mediating assembly of both ODAs and their axonemal docking complex onto ciliary microtubules. The protein is Outer dynein arm-docking complex subunit 1 of Homo sapiens (Human).